Reading from the N-terminus, the 758-residue chain is 5-methyltetrahydropteroyltriglutamate--homocysteine methyltransferase (758 aa).

5-methyltetrahydropteroyltri-L-glutamate-binding positions include arginine 17 to lysine 20 and lysine 117. Residues isoleucine 434–serine 436 and glutamate 487 each bind L-homocysteine. L-methionine is bound by residues isoleucine 434–serine 436 and glutamate 487. 5-methyltetrahydropteroyltri-L-glutamate contacts are provided by residues arginine 518–cysteine 519 and tryptophan 564. Aspartate 602 is an L-homocysteine binding site. Aspartate 602 serves as a coordination point for L-methionine. Glutamate 608 is a binding site for 5-methyltetrahydropteroyltri-L-glutamate. Positions 644, 646, and 668 each coordinate Zn(2+). The active-site Proton donor is the histidine 697. Residue cysteine 729 coordinates Zn(2+).

Belongs to the vitamin-B12 independent methionine synthase family. The cofactor is Zn(2+).

It carries out the reaction 5-methyltetrahydropteroyltri-L-glutamate + L-homocysteine = tetrahydropteroyltri-L-glutamate + L-methionine. It functions in the pathway amino-acid biosynthesis; L-methionine biosynthesis via de novo pathway; L-methionine from L-homocysteine (MetE route): step 1/1. Catalyzes the transfer of a methyl group from 5-methyltetrahydrofolate to homocysteine resulting in methionine formation. This Yersinia pseudotuberculosis serotype O:1b (strain IP 31758) protein is 5-methyltetrahydropteroyltriglutamate--homocysteine methyltransferase.